A 182-amino-acid polypeptide reads, in one-letter code: Translation initiation factor IF-3 (182 aa).

Residues 1–22 (MPLGDCNISTPDNKQNRKNQEI) are disordered.

It belongs to the IF-3 family. As to quaternary structure, monomer.

It is found in the cytoplasm. In terms of biological role, IF-3 binds to the 30S ribosomal subunit and shifts the equilibrium between 70S ribosomes and their 50S and 30S subunits in favor of the free subunits, thus enhancing the availability of 30S subunits on which protein synthesis initiation begins. In Xanthomonas axonopodis pv. citri (strain 306), this protein is Translation initiation factor IF-3.